The following is a 289-amino-acid chain: tRNA pseudouridine synthase A (289 aa).

Catalysis depends on Asp67, which acts as the Nucleophile. Tyr125 provides a ligand contact to substrate.

Belongs to the tRNA pseudouridine synthase TruA family. As to quaternary structure, homodimer.

It carries out the reaction uridine(38/39/40) in tRNA = pseudouridine(38/39/40) in tRNA. Its function is as follows. Formation of pseudouridine at positions 38, 39 and 40 in the anticodon stem and loop of transfer RNAs. This is tRNA pseudouridine synthase A from Prochlorococcus marinus (strain MIT 9211).